The primary structure comprises 113 residues: MAALGSPSHTFRGLLRELRYLSAATGRPYRDTAAYRYLVKAFRAHRVTSEKLCRAQHELHFQAATYLCLLRSIRKHVALHQEFHGKGERSVEESAGLVGLKLPHQPGGKGWEP.

Residues 94–113 (SAGLVGLKLPHQPGGKGWEP) form a disordered region.

It belongs to the FMC1 family. In terms of assembly, interacts with ATPAF2.

The protein resides in the mitochondrion. Plays a role in the assembly/stability of the mitochondrial membrane ATP synthase (F(1)F(0) ATP synthase or Complex V). In Homo sapiens (Human), this protein is Protein FMC1 homolog.